Consider the following 386-residue polypeptide: D-galactosamine-6-phosphate deaminase AgaS (386 aa).

SIS domains are found at residues 59-217 and 222-366; these read LTPI…CIEM and LTER…PDNP.

The protein belongs to the SIS family. AgaS subfamily.

It is found in the cytoplasm. It catalyses the reaction D-galactosamine 6-phosphate + H2O = D-tagatopyranose 1-phosphate + NH4(+). It carries out the reaction alpha-D-glucosamine 6-phosphate + H2O = beta-D-fructose 6-phosphate + NH4(+). Involved in the pathway of N-acetyl-D-galactosamine degradation. Catalyzes the conversion of D-galactosamine 6-phosphate (GalN-6-P) to D-tagatofuranose 6-phosphate (Tag-6-P). It can also catalyze the conversion of D-glucosamine 6-phosphate. The protein is D-galactosamine-6-phosphate deaminase AgaS of Shewanella sp. (strain ANA-3).